Reading from the N-terminus, the 257-residue chain is Enterotoxin type A (257 aa).

Residues 1-24 (MKKTAFTLLLFIALTLTTSPLVNG) form the signal peptide. Cysteine 120 and cysteine 130 are disulfide-bonded. Residues histidine 211, histidine 249, and aspartate 251 each contribute to the Zn(2+) site.

Belongs to the staphylococcal/streptococcal toxin family. As to quaternary structure, monomer. Interacts with MHC class II molecules alpha/HLA-DRB1 and beta/HLA-DRA chains. The interaction with MHC-II molecules occurs at both zinc-dependent and zinc-independent sites. Interacts with T-cell receptor beta variable 7-9/TRBV7-9. The cofactor is Zn(2+).

Its subcellular location is the secreted. Its function is as follows. Staphylococcal enterotoxin that activates the host immune system by binding as unprocessed molecules to major histocompatibility (MHC) complex class II and T-cell receptor (TCR) molecules. In turn, waves of cellular activation, cytokine production, and migration into the lung tissue and airways occur via alphabeta T-cells. Also causes the intoxication staphylococcal food poisoning syndrome. The illness is characterized by high fever, hypotension, diarrhea, shock, and in some cases death. The sequence is that of Enterotoxin type A (entA) from Staphylococcus aureus.